A 497-amino-acid chain; its full sequence is Glucose-6-phosphate 1-dehydrogenase (497 aa).

NADP(+) contacts are provided by residues 17-24 (GASGDLAK), arginine 51, and lysine 151. D-glucose 6-phosphate contacts are provided by residues lysine 151, 181 to 185 (HYLGK), glutamate 219, and aspartate 238. The Proton acceptor role is filled by histidine 243. NADP(+) is bound at residue lysine 334. Residues lysine 337 and arginine 342 each coordinate D-glucose 6-phosphate. Positions 343, 347, and 371 each coordinate NADP(+). Glutamine 373 is a D-glucose 6-phosphate binding site. Residues 379-381 (YLK), 399-401 (DLS), arginine 465, and tryptophan 487 contribute to the NADP(+) site.

The protein belongs to the glucose-6-phosphate dehydrogenase family.

It is found in the cytoplasm. The protein localises to the cytosol. It catalyses the reaction D-glucose 6-phosphate + NADP(+) = 6-phospho-D-glucono-1,5-lactone + NADPH + H(+). It functions in the pathway carbohydrate degradation; pentose phosphate pathway; D-ribulose 5-phosphate from D-glucose 6-phosphate (oxidative stage): step 1/3. Functionally, cytosolic glucose-6-phosphate dehydrogenase that catalyzes the first and rate-limiting step of the oxidative branch within the pentose phosphate pathway/shunt, an alternative route to glycolysis for the dissimilation of carbohydrates and a major source of reducing power and metabolic intermediates for fatty acid and nucleic acid biosynthetic processes. The protein is Glucose-6-phosphate 1-dehydrogenase (g6pd-1) of Dictyostelium discoideum (Social amoeba).